The chain runs to 445 residues: Histidinol dehydrogenase (445 aa).

NAD(+) contacts are provided by Tyr-138, Gln-199, and Asn-222. Residues Ser-245, Gln-267, and His-270 each coordinate substrate. Gln-267 and His-270 together coordinate Zn(2+). Residues Glu-335 and His-336 each act as proton acceptor in the active site. Substrate is bound by residues His-336, Asp-369, Glu-423, and His-428. Asp-369 contributes to the Zn(2+) binding site. Residue His-428 participates in Zn(2+) binding.

It belongs to the histidinol dehydrogenase family. It depends on Zn(2+) as a cofactor.

It carries out the reaction L-histidinol + 2 NAD(+) + H2O = L-histidine + 2 NADH + 3 H(+). The protein operates within amino-acid biosynthesis; L-histidine biosynthesis; L-histidine from 5-phospho-alpha-D-ribose 1-diphosphate: step 9/9. Functionally, catalyzes the sequential NAD-dependent oxidations of L-histidinol to L-histidinaldehyde and then to L-histidine. This Burkholderia pseudomallei (strain 1710b) protein is Histidinol dehydrogenase.